We begin with the raw amino-acid sequence, 112 residues long: Large ribosomal subunit protein uL22 (112 aa).

It belongs to the universal ribosomal protein uL22 family. As to quaternary structure, part of the 50S ribosomal subunit.

Its function is as follows. This protein binds specifically to 23S rRNA; its binding is stimulated by other ribosomal proteins, e.g. L4, L17, and L20. It is important during the early stages of 50S assembly. It makes multiple contacts with different domains of the 23S rRNA in the assembled 50S subunit and ribosome. In terms of biological role, the globular domain of the protein is located near the polypeptide exit tunnel on the outside of the subunit, while an extended beta-hairpin is found that lines the wall of the exit tunnel in the center of the 70S ribosome. The sequence is that of Large ribosomal subunit protein uL22 from Finegoldia magna (strain ATCC 29328 / DSM 20472 / WAL 2508) (Peptostreptococcus magnus).